We begin with the raw amino-acid sequence, 492 residues long: Ketol-acid reductoisomerase (NADP(+)) (492 aa).

The region spanning 14–208 is the KARI N-terminal Rossmann domain; that stretch reads LDQLGRCRFM…GGHKAGVLES (195 aa). Residues 45–48, Arg68, Arg76, Ser78, and 108–110 contribute to the NADP(+) site; these read CGAQ and DKQ. The active site involves His132. Gly158 serves as a coordination point for NADP(+). KARI C-terminal knotted domains are found at residues 209 to 344 and 345 to 485; these read SFVA…NAPK and YDGK…MTDM. Mg(2+) contacts are provided by Asp217, Glu221, Glu389, and Glu393. Ser414 provides a ligand contact to substrate.

The protein belongs to the ketol-acid reductoisomerase family. The cofactor is Mg(2+).

It catalyses the reaction (2R)-2,3-dihydroxy-3-methylbutanoate + NADP(+) = (2S)-2-acetolactate + NADPH + H(+). The catalysed reaction is (2R,3R)-2,3-dihydroxy-3-methylpentanoate + NADP(+) = (S)-2-ethyl-2-hydroxy-3-oxobutanoate + NADPH + H(+). The protein operates within amino-acid biosynthesis; L-isoleucine biosynthesis; L-isoleucine from 2-oxobutanoate: step 2/4. It functions in the pathway amino-acid biosynthesis; L-valine biosynthesis; L-valine from pyruvate: step 2/4. In terms of biological role, involved in the biosynthesis of branched-chain amino acids (BCAA). Catalyzes an alkyl-migration followed by a ketol-acid reduction of (S)-2-acetolactate (S2AL) to yield (R)-2,3-dihydroxy-isovalerate. In the isomerase reaction, S2AL is rearranged via a Mg-dependent methyl migration to produce 3-hydroxy-3-methyl-2-ketobutyrate (HMKB). In the reductase reaction, this 2-ketoacid undergoes a metal-dependent reduction by NADPH to yield (R)-2,3-dihydroxy-isovalerate. In Haemophilus influenzae (strain PittEE), this protein is Ketol-acid reductoisomerase (NADP(+)).